A 498-amino-acid polypeptide reads, in one-letter code: ATP synthase subunit beta, chloroplastic (498 aa).

172-179 contributes to the ATP binding site; it reads GGAGVGKT.

The protein belongs to the ATPase alpha/beta chains family. F-type ATPases have 2 components, CF(1) - the catalytic core - and CF(0) - the membrane proton channel. CF(1) has five subunits: alpha(3), beta(3), gamma(1), delta(1), epsilon(1). CF(0) has four main subunits: a(1), b(1), b'(1) and c(9-12).

It localises to the plastid. It is found in the chloroplast thylakoid membrane. It carries out the reaction ATP + H2O + 4 H(+)(in) = ADP + phosphate + 5 H(+)(out). Functionally, produces ATP from ADP in the presence of a proton gradient across the membrane. The catalytic sites are hosted primarily by the beta subunits. In Eucalyptus globulus subsp. globulus (Tasmanian blue gum), this protein is ATP synthase subunit beta, chloroplastic.